The primary structure comprises 158 residues: Ribonuclease H (158 aa).

Residues 5–146 enclose the RNase H type-1 domain; that stretch reads MRKQIEIFTD…CDQLAKQGAE (142 aa). Asp-14, Glu-52, Asp-74, and Asp-138 together coordinate Mg(2+).

The protein belongs to the RNase H family. As to quaternary structure, monomer. It depends on Mg(2+) as a cofactor.

It is found in the cytoplasm. The catalysed reaction is Endonucleolytic cleavage to 5'-phosphomonoester.. In terms of biological role, endonuclease that specifically degrades the RNA of RNA-DNA hybrids. In Mannheimia succiniciproducens (strain KCTC 0769BP / MBEL55E), this protein is Ribonuclease H.